Reading from the N-terminus, the 307-residue chain is Glycerol-3-phosphate dehydrogenase [NAD(P)+] (307 aa).

NADPH is bound by residues phenylalanine 11, arginine 31, and lysine 95. 3 residues coordinate sn-glycerol 3-phosphate: lysine 95, glycine 121, and serine 123. Alanine 125 provides a ligand contact to NADPH. Sn-glycerol 3-phosphate contacts are provided by lysine 176, aspartate 229, serine 239, arginine 240, and asparagine 241. Lysine 176 (proton acceptor) is an active-site residue. Arginine 240 contacts NADPH. Glutamate 261 serves as a coordination point for NADPH.

Belongs to the NAD-dependent glycerol-3-phosphate dehydrogenase family.

It localises to the cytoplasm. The enzyme catalyses sn-glycerol 3-phosphate + NAD(+) = dihydroxyacetone phosphate + NADH + H(+). The catalysed reaction is sn-glycerol 3-phosphate + NADP(+) = dihydroxyacetone phosphate + NADPH + H(+). The protein operates within membrane lipid metabolism; glycerophospholipid metabolism. Catalyzes the reduction of the glycolytic intermediate dihydroxyacetone phosphate (DHAP) to sn-glycerol 3-phosphate (G3P), the key precursor for phospholipid synthesis. The polypeptide is Glycerol-3-phosphate dehydrogenase [NAD(P)+] (Jannaschia sp. (strain CCS1)).